Here is a 269-residue protein sequence, read N- to C-terminus: Autophagy protein 5 (269 aa).

Lysine 132 participates in a covalent cross-link: Glycyl lysine isopeptide (Lys-Gly) (interchain with G-Cter in ATG12).

This sequence belongs to the ATG5 family. Conjugated to Atg12, which is essential for autophagy.

The protein localises to the cytoplasm. Its subcellular location is the preautophagosomal structure membrane. Functionally, involved in autophagic vesicle formation. Conjugation with Atg12, through a ubiquitin-like conjugating system involving Atg7 as an E1-like activating enzyme and Atg10 as an E2-like conjugating enzyme, is essential for its function. The Atg12-Atg5 conjugate acts as an E3-like enzyme which is required for lipidation of Atg8 and its association to the vesicle membranes. This Drosophila melanogaster (Fruit fly) protein is Autophagy protein 5 (Atg5).